The following is a 507-amino-acid chain: Alkyl hydroperoxide reductase subunit F (507 aa).

207 to 222 (DVLIVGGGPASGSAAI) serves as a coordination point for FAD. Cys335 and Cys338 are disulfide-bonded. NAD(+) is bound at residue 347 to 361 (DVAVIGGGNSGVEAA). An FAD-binding site is contributed by 467 to 477 (TNVPGIFAAGD).

This sequence belongs to the class-II pyridine nucleotide-disulfide oxidoreductase family. In terms of assembly, homodimer. FAD serves as cofactor.

In terms of biological role, serves to protect the cell against DNA damage by alkyl hydroperoxides. It can use either NADH or NADPH as electron donor for direct reduction of redox dyes or of alkyl hydroperoxides when combined with the AhpC protein. The chain is Alkyl hydroperoxide reductase subunit F (ahpF) from Staphylococcus aureus (strain Mu50 / ATCC 700699).